Reading from the N-terminus, the 191-residue chain is GDP-mannose pyrophosphatase (191 aa).

GDP-alpha-D-mannose is bound by residues tyrosine 17, 38–40 (KRE), arginine 67, and 85–87 (AGL). Residues 43–180 (DRGNGATILL…EIRDGKTVLL (138 aa)) form the Nudix hydrolase domain. Mg(2+) is bound by residues alanine 85, glutamate 100, and glutamate 104. The Nudix box motif lies at 86 to 106 (GLLDNDEPEVCIRKEAIEETG). GDP-alpha-D-mannose contacts are provided by residues glutamate 104, glutamate 127, 150 to 151 (DE), and lysine 176. Glutamate 151 contacts Mg(2+).

This sequence belongs to the Nudix hydrolase family. NudK subfamily. In terms of assembly, homodimer. It depends on Mg(2+) as a cofactor.

The catalysed reaction is GDP-alpha-D-mannose + H2O = alpha-D-mannose 1-phosphate + GMP + 2 H(+). Its function is as follows. Nucleoside diphosphate sugar hydrolase that hydrolyzes GDP-mannose as its preferred substrate, yielding GMP and mannose-1-phosphate. This chain is GDP-mannose pyrophosphatase (nudK), found in Shigella dysenteriae serotype 1 (strain Sd197).